Reading from the N-terminus, the 273-residue chain is 4-hydroxy-tetrahydrodipicolinate reductase (273 aa).

Residue 12–17 (GSGGRM) coordinates NAD(+). Arg-39 is a binding site for NADP(+). NAD(+) is bound by residues 102 to 104 (GTT) and 126 to 129 (AANF). Catalysis depends on His-159, which acts as the Proton donor/acceptor. (S)-2,3,4,5-tetrahydrodipicolinate is bound at residue His-160. The Proton donor role is filled by Lys-163. 169-170 (GT) contacts (S)-2,3,4,5-tetrahydrodipicolinate.

The protein belongs to the DapB family. In terms of assembly, homotetramer.

It localises to the cytoplasm. It catalyses the reaction (S)-2,3,4,5-tetrahydrodipicolinate + NAD(+) + H2O = (2S,4S)-4-hydroxy-2,3,4,5-tetrahydrodipicolinate + NADH + H(+). The catalysed reaction is (S)-2,3,4,5-tetrahydrodipicolinate + NADP(+) + H2O = (2S,4S)-4-hydroxy-2,3,4,5-tetrahydrodipicolinate + NADPH + H(+). Its pathway is amino-acid biosynthesis; L-lysine biosynthesis via DAP pathway; (S)-tetrahydrodipicolinate from L-aspartate: step 4/4. Its function is as follows. Catalyzes the conversion of 4-hydroxy-tetrahydrodipicolinate (HTPA) to tetrahydrodipicolinate. The sequence is that of 4-hydroxy-tetrahydrodipicolinate reductase from Serratia proteamaculans (strain 568).